A 32-amino-acid polypeptide reads, in one-letter code: Delta-conotoxin-like CnVIC (32 aa).

3 disulfides stabilise this stretch: Cys-3-Cys-18, Cys-10-Cys-22, and Cys-17-Cys-27. A 4-hydroxyproline mark is found at Pro-6 and Pro-14.

Belongs to the conotoxin O1 superfamily. As to expression, expressed by the venom duct.

The protein resides in the secreted. Its function is as follows. Delta-conotoxins bind to site 6 of voltage-gated sodium channels (Nav) and inhibit the inactivation process. This toxin acts on Nav1.2/SCN2A, Nav1.4/SCN4A, Nav1.5/SCN5A (weak activity), Nav1.6/SCN8A (EC(50)=2.5 uM). This is Delta-conotoxin-like CnVIC from Conus consors (Singed cone).